Here is a 572-residue protein sequence, read N- to C-terminus: Proline--tRNA ligase (572 aa).

It belongs to the class-II aminoacyl-tRNA synthetase family. ProS type 1 subfamily. In terms of assembly, homodimer.

It is found in the cytoplasm. It catalyses the reaction tRNA(Pro) + L-proline + ATP = L-prolyl-tRNA(Pro) + AMP + diphosphate. Its function is as follows. Catalyzes the attachment of proline to tRNA(Pro) in a two-step reaction: proline is first activated by ATP to form Pro-AMP and then transferred to the acceptor end of tRNA(Pro). As ProRS can inadvertently accommodate and process non-cognate amino acids such as alanine and cysteine, to avoid such errors it has two additional distinct editing activities against alanine. One activity is designated as 'pretransfer' editing and involves the tRNA(Pro)-independent hydrolysis of activated Ala-AMP. The other activity is designated 'posttransfer' editing and involves deacylation of mischarged Ala-tRNA(Pro). The misacylated Cys-tRNA(Pro) is not edited by ProRS. This chain is Proline--tRNA ligase, found in Klebsiella pneumoniae (strain 342).